We begin with the raw amino-acid sequence, 120 residues long: NAD(P)H-quinone oxidoreductase subunit 3, chloroplastic (120 aa).

Transmembrane regions (helical) follow at residues 9–29 (IFWA…WISA), 64–84 (MFAL…PWAM), and 88–108 (VLGI…VVGL).

It belongs to the complex I subunit 3 family. As to quaternary structure, NDH is composed of at least 16 different subunits, 5 of which are encoded in the nucleus.

It localises to the plastid. The protein resides in the chloroplast thylakoid membrane. It catalyses the reaction a plastoquinone + NADH + (n+1) H(+)(in) = a plastoquinol + NAD(+) + n H(+)(out). The catalysed reaction is a plastoquinone + NADPH + (n+1) H(+)(in) = a plastoquinol + NADP(+) + n H(+)(out). NDH shuttles electrons from NAD(P)H:plastoquinone, via FMN and iron-sulfur (Fe-S) centers, to quinones in the photosynthetic chain and possibly in a chloroplast respiratory chain. The immediate electron acceptor for the enzyme in this species is believed to be plastoquinone. Couples the redox reaction to proton translocation, and thus conserves the redox energy in a proton gradient. In Oryza nivara (Indian wild rice), this protein is NAD(P)H-quinone oxidoreductase subunit 3, chloroplastic.